The chain runs to 159 residues: Endoribonuclease YbeY (159 aa).

3 residues coordinate Zn(2+): H125, H129, and H135.

Belongs to the endoribonuclease YbeY family. Requires Zn(2+) as cofactor.

It localises to the cytoplasm. Functionally, single strand-specific metallo-endoribonuclease involved in late-stage 70S ribosome quality control and in maturation of the 3' terminus of the 16S rRNA. The sequence is that of Endoribonuclease YbeY from Ligilactobacillus salivarius (strain UCC118) (Lactobacillus salivarius).